Reading from the N-terminus, the 287-residue chain is ATP synthase gamma chain (287 aa).

Belongs to the ATPase gamma chain family. As to quaternary structure, F-type ATPases have 2 components, CF(1) - the catalytic core - and CF(0) - the membrane proton channel. CF(1) has five subunits: alpha(3), beta(3), gamma(1), delta(1), epsilon(1). CF(0) has three main subunits: a, b and c.

The protein localises to the cell membrane. In terms of biological role, produces ATP from ADP in the presence of a proton gradient across the membrane. The gamma chain is believed to be important in regulating ATPase activity and the flow of protons through the CF(0) complex. This is ATP synthase gamma chain from Bacillus velezensis (strain DSM 23117 / BGSC 10A6 / LMG 26770 / FZB42) (Bacillus amyloliquefaciens subsp. plantarum).